Consider the following 179-residue polypeptide: MTRLENIYREKVVPVLQKEFNYDSSMQVPGIVKVSLNIGLGAASQNNKLMEEALKELTVIAGQKAVVTRAKKSIASFKLREGMPIGCRVTLRKERMWDFLDKLINFALPRVRDFRGVPDRGFDGRGNFTLGIKEHAIFPEMEADRVENPKGMNITIVTTATTDKEGKLLLDQLGMPFRK.

The protein belongs to the universal ribosomal protein uL5 family. As to quaternary structure, part of the 50S ribosomal subunit; part of the 5S rRNA/L5/L18/L25 subcomplex. Contacts the 5S rRNA and the P site tRNA. Forms a bridge to the 30S subunit in the 70S ribosome.

Its function is as follows. This is one of the proteins that bind and probably mediate the attachment of the 5S RNA into the large ribosomal subunit, where it forms part of the central protuberance. In the 70S ribosome it contacts protein S13 of the 30S subunit (bridge B1b), connecting the 2 subunits; this bridge is implicated in subunit movement. Contacts the P site tRNA; the 5S rRNA and some of its associated proteins might help stabilize positioning of ribosome-bound tRNAs. This Nitratidesulfovibrio vulgaris (strain ATCC 29579 / DSM 644 / CCUG 34227 / NCIMB 8303 / VKM B-1760 / Hildenborough) (Desulfovibrio vulgaris) protein is Large ribosomal subunit protein uL5.